A 404-amino-acid polypeptide reads, in one-letter code: MSPSDVPINWKRNLTVTWLGCFLTGAAFSLVMPFLPLYVEQLGVTGHSALNMWSGLVFSITFLFSAIASPFWGGLADRKGRKIMLLRSALGMAIVMLLMGMAQNIWQFLILRALLGLLGGFIPNANALIATQVPRHKSGWALGTLSTGGVSGALLGPLAGGLLADHYGLRPVFFITASVLFICFLLTFFFIRENFLPVSKKEMLHVREVVASLKNPRLVLSLFVTTLIIQVATGSIAPILTLYVRELAGNVSNIAFISGMIASVPGVAALLSAPRLGKLGDRIGPEKILIVALIISVLLLIPMSFVQTPWQLALLRFLLGAADGALLPAVQTLLVYNSTNQIAGRIFSYNQSFRDIGNVTGPLMGAAISASYGFRAVFCVTAGVVLFNAIYSWNSLRRRRLAIE.

The next 11 helical transmembrane spans lie at 19-39 (LGCF…PLYV), 56-76 (LVFS…GGLA), 90-110 (LGMA…QFLI), 113-133 (ALLG…ATQV), 144-164 (TLST…GLLA), 171-191 (PVFF…FFFI), 222-242 (LFVT…ILTL), 254-274 (IAFI…LSAP), 288-308 (ILIV…FVQT), 317-337 (FLLG…LVYN), and 376-396 (AVFC…WNSL).

The protein belongs to the major facilitator superfamily. DHA1 family. MdtG (TC 2.A.1.2.20) subfamily.

It is found in the cell inner membrane. The polypeptide is Multidrug resistance protein MdtG (Salmonella agona (strain SL483)).